Reading from the N-terminus, the 184-residue chain is Adenine phosphoribosyltransferase (184 aa).

The protein belongs to the purine/pyrimidine phosphoribosyltransferase family. In terms of assembly, homodimer.

The protein localises to the cytoplasm. It catalyses the reaction AMP + diphosphate = 5-phospho-alpha-D-ribose 1-diphosphate + adenine. Its pathway is purine metabolism; AMP biosynthesis via salvage pathway; AMP from adenine: step 1/1. Catalyzes a salvage reaction resulting in the formation of AMP, that is energically less costly than de novo synthesis. This is Adenine phosphoribosyltransferase from Paracidovorax citrulli (strain AAC00-1) (Acidovorax citrulli).